Here is a 157-residue protein sequence, read N- to C-terminus: Protein Smg homolog (157 aa).

The protein belongs to the Smg family.

The polypeptide is Protein Smg homolog (Xanthomonas euvesicatoria pv. vesicatoria (strain 85-10) (Xanthomonas campestris pv. vesicatoria)).